The primary structure comprises 155 residues: Large ribosomal subunit protein uL13 (155 aa).

Belongs to the universal ribosomal protein uL13 family. Part of the 50S ribosomal subunit.

In terms of biological role, this protein is one of the early assembly proteins of the 50S ribosomal subunit, although it is not seen to bind rRNA by itself. It is important during the early stages of 50S assembly. The sequence is that of Large ribosomal subunit protein uL13 from Rickettsia conorii (strain ATCC VR-613 / Malish 7).